Reading from the N-terminus, the 138-residue chain is Cofilin (138 aa).

Residues 2–136 form the ADF-H domain; sequence SSGVQPTQEC…TKDALFEKAT (135 aa).

Belongs to the actin-binding proteins ADF family.

Its subcellular location is the cytoplasm. The protein resides in the cytoskeleton. The protein localises to the nucleus matrix. Functionally, controls reversibly actin polymerization and depolymerization in a pH-sensitive manner. It has the ability to bind G- and F-actin in a 1:1 ratio of cofilin to actin. Binding to F-actin is regulated by tropomyosin. It is the major component of intranuclear and cytoplasmic actin rods. Required for accumulation of actin at the cell division site via depolymerizing actin at the cell ends. In association with myosin II has a role in the assembly of the contractile ring via severing actin filaments. Involved in the maintenance of the contractile ring once formed. In association with profilin and capping protein, has a role in the mitotic reorganization of the actin cytoskeleton. This chain is Cofilin (COF1), found in Cryptococcus neoformans var. neoformans serotype D (strain B-3501A) (Filobasidiella neoformans).